A 297-amino-acid polypeptide reads, in one-letter code: ClpXP adapter protein SpxH (297 aa).

It belongs to the SpxH family. Interacts with Spx.

It localises to the cytoplasm. Functionally, adapter protein required for efficient degradation of Spx by ClpXP under non-stress conditions. Interaction with Spx stabilizes Spx and exposes the C-terminus of Spx for recognition and proteolysis by ClpXP. The sequence is that of ClpXP adapter protein SpxH from Bacillus cereus (strain ZK / E33L).